Here is a 141-residue protein sequence, read N- to C-terminus: Large ribosomal subunit protein uL22 (141 aa).

The tract at residues 108-141 is disordered; sequence KSEEKKTVAKKTTTTKAPAKKTTSTKKATVKKES. Residues 117–134 are compositionally biased toward low complexity; that stretch reads KKTTTTKAPAKKTTSTKK.

The protein belongs to the universal ribosomal protein uL22 family. In terms of assembly, part of the 50S ribosomal subunit.

Its function is as follows. This protein binds specifically to 23S rRNA; its binding is stimulated by other ribosomal proteins, e.g. L4, L17, and L20. It is important during the early stages of 50S assembly. It makes multiple contacts with different domains of the 23S rRNA in the assembled 50S subunit and ribosome. In terms of biological role, the globular domain of the protein is located near the polypeptide exit tunnel on the outside of the subunit, while an extended beta-hairpin is found that lines the wall of the exit tunnel in the center of the 70S ribosome. The chain is Large ribosomal subunit protein uL22 from Campylobacter jejuni subsp. jejuni serotype O:2 (strain ATCC 700819 / NCTC 11168).